The primary structure comprises 639 residues: Splicing factor 1 (639 aa).

Disordered stretches follow at residues M1 to P42 and L65 to L94. An N-acetylalanine modification is found at A2. S14 bears the Phosphoserine mark. The Nuclear localization signal motif lies at K15–R19. At S20 the chain carries Phosphoserine; by PKG. S80 and S82 each carry phosphoserine. Position 87 is a phosphotyrosine (Y87). S89 bears the Phosphoserine mark. A KH domain is found at M141–I222. Residues T277–R296 form a CCHC-type zinc finger. Positions V325 to N639 are disordered. Positions P335–A350 are enriched in low complexity. Positions M382 to P394 are enriched in gly residues. The span at N418–M447 shows a compositional bias: pro residues. L463 carries the post-translational modification Phosphoserine. Residue K467 is modified to Omega-N-methylarginine. Residues M470–P499 are compositionally biased toward pro residues. 2 stretches are compositionally biased toward low complexity: residues S515–T534 and P542–M566. 2 stretches are compositionally biased toward pro residues: residues V567 to G591 and A598 to D608. The segment covering M615–P625 has biased composition (low complexity). Positions F626–N639 are enriched in pro residues.

This sequence belongs to the BBP/SF1 family. As to quaternary structure, binds U2AF2. Interacts with U1 snRNA. Binds EWSR1, FUS and TAF15. Interacts with RBM17. Post-translationally, phosphorylation on Ser-20 interferes with U2AF2 binding and spliceosome assembly. Isoform 6 is phosphorylated on Ser-463. As to expression, detected in lung, ovary, adrenal gland, colon, kidney, muscle, pancreas, thyroid, placenta, brain, liver and heart.

Its subcellular location is the nucleus. Necessary for the ATP-dependent first step of spliceosome assembly. Binds to the intron branch point sequence (BPS) 5'-UACUAAC-3' of the pre-mRNA. May act as transcription repressor. This chain is Splicing factor 1 (SF1), found in Homo sapiens (Human).